We begin with the raw amino-acid sequence, 445 residues long: 3-phosphoshikimate 1-carboxyvinyltransferase (445 aa).

Lys21, Ser22, and Arg26 together coordinate 3-phosphoshikimate. Lys21 provides a ligand contact to phosphoenolpyruvate. Residues Gly92 and Arg120 each coordinate phosphoenolpyruvate. Ser165, Gln166, Asp307, and Lys334 together coordinate 3-phosphoshikimate. Gln166 is a binding site for phosphoenolpyruvate. Asp307 acts as the Proton acceptor in catalysis. Residues Arg338, Arg379, and Lys405 each coordinate phosphoenolpyruvate.

It belongs to the EPSP synthase family. Monomer.

The protein resides in the cytoplasm. The catalysed reaction is 3-phosphoshikimate + phosphoenolpyruvate = 5-O-(1-carboxyvinyl)-3-phosphoshikimate + phosphate. It participates in metabolic intermediate biosynthesis; chorismate biosynthesis; chorismate from D-erythrose 4-phosphate and phosphoenolpyruvate: step 6/7. Its function is as follows. Catalyzes the transfer of the enolpyruvyl moiety of phosphoenolpyruvate (PEP) to the 5-hydroxyl of shikimate-3-phosphate (S3P) to produce enolpyruvyl shikimate-3-phosphate and inorganic phosphate. The sequence is that of 3-phosphoshikimate 1-carboxyvinyltransferase from Chlamydia felis (strain Fe/C-56) (Chlamydophila felis).